Here is a 333-residue protein sequence, read N- to C-terminus: UPF0284 protein VNG_1572C (333 aa).

Belongs to the UPF0284 family.

In Halobacterium salinarum (strain ATCC 700922 / JCM 11081 / NRC-1) (Halobacterium halobium), this protein is UPF0284 protein VNG_1572C.